We begin with the raw amino-acid sequence, 71 residues long: R-phycoerythrin gamma-1 chain, chloroplastic (71 aa).

Residues Cys25 and Cys34 each coordinate phycourobilin. Cys49 is a binding site for (2R,3E)-phycoerythrobilin. Cys58 provides a ligand contact to phycourobilin.

As to quaternary structure, heteromer of 6 alpha, 6 beta and 1 gamma chains. Contains four covalently linked bilin chromophores.

It is found in the plastid. The protein localises to the chloroplast thylakoid membrane. In terms of biological role, critical for the incorporation of phycoerythrin in the phycobilisome complex. The chain is R-phycoerythrin gamma-1 chain, chloroplastic from Gastroclonium coulteri (Red alga).